The sequence spans 883 residues: Ankyrin repeat and SAM domain-containing protein 6 (883 aa).

ANK repeat units lie at residues 8 to 37 (PGLQ…DPVA), 68 to 97 (AGNS…SVNS), 101 to 130 (YGWS…DVNA), 134 to 163 (LGAS…IVDH), 181 to 210 (LGIT…DPNH), 215 to 244 (VGWS…NPDH), 282 to 312 (KRRP…HVNL), 316 to 345 (DGAT…DMDK), 350 to 379 (HGWT…DVAL), and 383 to 414 (NGYT…QVNK). Residues 30 to 50 (EPGADPVAGPEAGAEPAGPEA) form a disordered region. 4 disordered regions span residues 414 to 439 (KDRG…IPVL), 490 to 522 (MRAP…RREK), 566 to 773 (SHTC…ITDE), and 852 to 883 (SFES…SSRR). Residues 566–576 (SHTCHNGKADP) show a composition bias toward basic and acidic residues. Residues 607–630 (PSISRSPASPASSGSFNHSPHSSG) show a composition bias toward low complexity. The segment covering 631–640 (GASGIGGMSR) has biased composition (gly residues). At S649 the chain carries Phosphoserine. A compositionally biased stretch (polar residues) spans 649–661 (SGGSVDSVLSQIA). 2 stretches are compositionally biased toward low complexity: residues 687-711 (SSSP…PSSS) and 720-737 (PPSG…TLTP). A phosphoserine mark is found at S732 and S740. A compositionally biased stretch (low complexity) spans 748 to 768 (SSVSSSSSHRQSKSSGGSSSG). The SAM domain maps to 771-834 (TDEDELTGIL…LAAISELNAG (64 aa)). Residues 852–862 (SFESSASNTRA) are compositionally biased toward polar residues. Over residues 874–883 (RPEETVSSRR) the composition is skewed to basic and acidic residues.

Homooligomer. Interacts with NEK8. Central component of a complex containing at least ANKS6, INVS, NEK8 and NPHP3. ANKS6 may organize complex assembly by linking INVS and NPHP3 to NEK8 and INVS may target the complex to the proximal ciliary axoneme. Interacts (via SAM domain) with BICC1 (via KH domains) in an RNA-dependent manner. Interacts (via SAM domain) with ANKS3 (via SAM domain). Post-translationally, hydroxylated at Asn-129, most probably by HIF1AN. This hydroxylation results in decreased NEK8-binding. As to expression, expressed in kidney (at protein level).

The protein resides in the cell projection. The protein localises to the cilium. It localises to the cytoplasm. Functionally, required for renal function. The chain is Ankyrin repeat and SAM domain-containing protein 6 (Anks6) from Mus musculus (Mouse).